The sequence spans 209 residues: Small ribosomal subunit protein uS4 (209 aa).

A disordered region spans residues arginine 22 to serine 45. Residues cysteine 93–glutamate 154 form the S4 RNA-binding domain.

This sequence belongs to the universal ribosomal protein uS4 family. Part of the 30S ribosomal subunit. Contacts protein S5. The interaction surface between S4 and S5 is involved in control of translational fidelity.

Its function is as follows. One of the primary rRNA binding proteins, it binds directly to 16S rRNA where it nucleates assembly of the body of the 30S subunit. In terms of biological role, with S5 and S12 plays an important role in translational accuracy. The sequence is that of Small ribosomal subunit protein uS4 from Chlamydia muridarum (strain MoPn / Nigg).